The primary structure comprises 131 residues: Large ribosomal subunit protein bL17 (131 aa).

It belongs to the bacterial ribosomal protein bL17 family. Part of the 50S ribosomal subunit. Contacts protein L32.

The chain is Large ribosomal subunit protein bL17 from Sodalis glossinidius (strain morsitans).